We begin with the raw amino-acid sequence, 882 residues long: Apoptosis-linked gene 2-interacting protein X 1 (882 aa).

The 394-residue stretch at 5 to 398 (GFLSAPLKST…VRMREATQLM (394 aa)) folds into the BRO1 domain. Positions 743-882 (GTNAAQSPAN…GGGGGANPFQ (140 aa)) are disordered. Over residues 752 to 763 (NAPPRPPPPRPA) the composition is skewed to pro residues. 2 stretches are compositionally biased toward low complexity: residues 791 to 830 (NPYQ…QYQP) and 847 to 871 (QQQW…QNQQ). Over residues 872–882 (QGGGGGANPFQ) the composition is skewed to gly residues.

Functionally, required for lin-12 degradation after it has been internalised in the vulval precursor cells. This chain is Apoptosis-linked gene 2-interacting protein X 1 (alx-1), found in Caenorhabditis elegans.